A 184-amino-acid polypeptide reads, in one-letter code: Structural protein V8 (184 aa).

The disordered stretch occupies residues 14 to 35 (IYNKSNTLTNTPSNPTGNTNTL).

The protein belongs to the sputnik virus V6 family.

Its subcellular location is the virion. In Sputnik virophage, this protein is Structural protein V8.